We begin with the raw amino-acid sequence, 346 residues long: MSRRVRRGGLRVAVPKQETPVSKFLTASGTFQDDDIKLNHTGLRVVSSEPNLPTQTQSSSPDGQLSIADLELVRFLGKGAGGTVQLVRHKWTNVNYALKAIQMNINETVRKQIVQELKINQVTHQQCPYIVECFHSFYHNGVISMILEYMDRGSLSDIIKQQKQIPEPYLAVIASQVLKGLEYLHQVRHIIHRDIKPSNLLINHKGEVKISDFGVSAVLVHSLAQRDTFVGTCTYMSPERLQGRSYAYDSDLWSLGLTLLECALGTFPYKPAGMEEGWQNFFILMECIVNQPPAAASPDKFSPEFCSFIESCIRKCPSERPSTTDLLKHPFLQKYNEEEYHLSKIL.

The region spanning 70–332 is the Protein kinase domain; it reads LELVRFLGKG…TTDLLKHPFL (263 aa). Residues 76-84 and Lys-99 contribute to the ATP site; that span reads LGKGAGGTV. Asp-194 acts as the Proton acceptor in catalysis.

The protein belongs to the protein kinase superfamily. STE Ser/Thr protein kinase family. MAP kinase kinase subfamily.

The enzyme catalyses L-seryl-[protein] + ATP = O-phospho-L-seryl-[protein] + ADP + H(+). It catalyses the reaction L-threonyl-[protein] + ATP = O-phospho-L-threonyl-[protein] + ADP + H(+). It carries out the reaction L-tyrosyl-[protein] + ATP = O-phospho-L-tyrosyl-[protein] + ADP + H(+). In terms of biological role, the CERK1, MEKK1a/b, MKK1a/b/c and MPK4a/b proteins are involved in pathogen defense. The pathway induces rapid growth inhibition, cell wall depositions and accumulation of defense-related transcripts. This protein is required for full defense response to fungal pathogen chitin. The protein is Mitogen-activated protein kinase kinase 1c of Physcomitrium patens (Spreading-leaved earth moss).